The primary structure comprises 409 residues: tRNA(Met) cytidine acetate ligase (409 aa).

ATP-binding positions include 7–20 (VVEY…HLYH), Gly102, Asn169, and Arg194.

Belongs to the TmcAL family.

The protein resides in the cytoplasm. It carries out the reaction cytidine(34) in elongator tRNA(Met) + acetate + ATP = N(4)-acetylcytidine(34) in elongator tRNA(Met) + AMP + diphosphate. Its function is as follows. Catalyzes the formation of N(4)-acetylcytidine (ac(4)C) at the wobble position of elongator tRNA(Met), using acetate and ATP as substrates. First activates an acetate ion to form acetyladenylate (Ac-AMP) and then transfers the acetyl group to tRNA to form ac(4)C34. This is tRNA(Met) cytidine acetate ligase from Clostridium botulinum (strain Okra / Type B1).